The following is a 159-amino-acid chain: SsrA-binding protein (159 aa).

Residues 137-147 (LAERQANRETE) show a composition bias toward basic and acidic residues. Residues 137-159 (LAERQANRETEQAVGRRLKGMHD) are disordered.

The protein belongs to the SmpB family.

The protein localises to the cytoplasm. Required for rescue of stalled ribosomes mediated by trans-translation. Binds to transfer-messenger RNA (tmRNA), required for stable association of tmRNA with ribosomes. tmRNA and SmpB together mimic tRNA shape, replacing the anticodon stem-loop with SmpB. tmRNA is encoded by the ssrA gene; the 2 termini fold to resemble tRNA(Ala) and it encodes a 'tag peptide', a short internal open reading frame. During trans-translation Ala-aminoacylated tmRNA acts like a tRNA, entering the A-site of stalled ribosomes, displacing the stalled mRNA. The ribosome then switches to translate the ORF on the tmRNA; the nascent peptide is terminated with the 'tag peptide' encoded by the tmRNA and targeted for degradation. The ribosome is freed to recommence translation, which seems to be the essential function of trans-translation. The sequence is that of SsrA-binding protein from Nocardioides sp. (strain ATCC BAA-499 / JS614).